Consider the following 474-residue polypeptide: MAATHPKAPTAQRLRQGWSAFWDYETPKVIVVRNRPLGVVYRAVQLLILLYFVWYVFIVQKSYQDSETGPESSIITKVKGITQSEHKVWDVEEYVKPPEGGSVFSIITRIEVTPFQTLGACPESIRVPNTTCHLDADCTAGELDMLGNGLRTGRCVPYYHGEAKTCEVSGWCPVEDGAAVSHFLGKMAPNFTILIKNSIHYPKFQFSKGNIAHRDMTYLRRCTFDQGFDPYCPIFRLGFIVEQAGENFTELAHRGGVIGVIINWDCDLDLPSSHCNPKYSFRRLDPKHVPASSGYNFRFAKYYRVNSTTTRTLIKAYGIRIDVIVHGQAGKFSLIPTIINLATALTSIGVGSFLCDWILLTFMNKNKVYSHKKFDKVCAPSRPSSSWPVTLALILGQAPPPPRHCSSPWHLAHQAVGPQGAEQAKLLGLQNPTPYRLSEQIADTPDRCVGQGLPSSESPLQDSTPTDPKGLAQL.

The Cytoplasmic segment spans residues 1–42; it reads MAATHPKAPTAQRLRQGWSAFWDYETPKVIVVRNRPLGVVYR. Residues 43–60 traverse the membrane as a helical segment; sequence AVQLLILLYFVWYVFIVQ. Residues 61–333 lie on the Extracellular side of the membrane; sequence KSYQDSETGP…IVHGQAGKFS (273 aa). ATP is bound by residues lysine 77 and lysine 79. 3 disulfides stabilise this stretch: cysteine 121/cysteine 172, cysteine 132/cysteine 155, and cysteine 138/cysteine 166. Asparagine 129 carries N-linked (GlcNAc...) asparagine glycosylation. Residue asparagine 190 is glycosylated (N-linked (GlcNAc...) asparagine). Threonine 192 is a binding site for ATP. Residues cysteine 222 and cysteine 232 are joined by a disulfide bond. A glycan (N-linked (GlcNAc...) asparagine) is linked at asparagine 247. A disulfide bond links cysteine 266 and cysteine 275. Residues serine 292, asparagine 296, and arginine 298 each contribute to the ATP site. Residue asparagine 306 is glycosylated (N-linked (GlcNAc...) asparagine). ATP is bound at residue lysine 315. The tract at residues 316–329 is pore-forming motif; it reads AYGIRIDVIVHGQA. The chain crosses the membrane as a helical span at residues 334 to 354; the sequence is LIPTIINLATALTSIGVGSFL. Residues 355–474 lie on the Cytoplasmic side of the membrane; that stretch reads CDWILLTFMN…PTDPKGLAQL (120 aa). The interval 445–474 is disordered; sequence PDRCVGQGLPSSESPLQDSTPTDPKGLAQL. Residues 453–466 show a composition bias toward polar residues; the sequence is LPSSESPLQDSTPT.

This sequence belongs to the P2X receptor family. In terms of assembly, homotrimer and heterotrimer; functional P2XRs are organized as homomeric and heteromeric trimers. Homotrimer. Forms heterodimer with P2RX1. Forms heterotrimer with P2RX6. Forms heterotrimer with P2RX3. Express in organ of Corti.

It is found in the cell membrane. The enzyme catalyses Ca(2+)(in) = Ca(2+)(out). It carries out the reaction K(+)(in) = K(+)(out). It catalyses the reaction Na(+)(in) = Na(+)(out). Its activity is regulated as follows. Fast activation by external ATP. Exhibits slow desensitization during prolonged ATP activation. Not sensitive to the ATP agonist:alpha/beta-methylene-ATP. Functionally, ATP-gated nonselective transmembrane cation channel permeable to potassium, sodium and calcium. Activation by extracellular ATP induces a variety of cellular responses, such as excitatory postsynaptic responses in sensory neurons, neuromuscular junctions (NMJ) formation, hearing, perception of taste and peristalsis. In the inner ear, regulates sound transduction and auditory neurotransmission, outer hair cell electromotility, inner ear gap junctions, and K(+) recycling. Mediates synaptic transmission between neurons and from neurons to smooth muscle. The chain is P2X purinoceptor 2 (P2RX2) from Cavia porcellus (Guinea pig).